The sequence spans 450 residues: IMP-specific 5'-nucleotidase 1 (450 aa).

ATP is bound at residue histidine 144. The active-site Nucleophile is aspartate 172. IMP-binding residues include aspartate 172, aspartate 174, aspartate 180, threonine 208, aspartate 376, and lysine 384. 2 residues coordinate Mg(2+): aspartate 172 and aspartate 174. The active-site Proton donor is the aspartate 174. A Mg(2+)-binding site is contributed by aspartate 411.

This sequence belongs to the ISN1 family. In terms of assembly, homotetramer. Requires Mg(2+) as cofactor.

It catalyses the reaction IMP + H2O = inosine + phosphate. Its activity is regulated as follows. Allosterically activated by ATP. ATP binding is a prerequisite to magnesium and substrate binding. ATP binds to 2 of the subunits in the homotetramer inducing a closure of these 2 subunits and the release of the C-terminal loop, thereby activating the enzyme. Functionally, IMP-specific 5'-nucleotidase involved in IMP (inosine 5'-phosphate) degradation. The polypeptide is IMP-specific 5'-nucleotidase 1 (ISN1) (Saccharomyces cerevisiae (strain ATCC 204508 / S288c) (Baker's yeast)).